We begin with the raw amino-acid sequence, 212 residues long: HTH-type transcriptional regulator RutR (212 aa).

In terms of domain architecture, HTH tetR-type spans 17-77 (SAKKKAILSA…AVLRQILDIW (61 aa)). Positions 39–58 (TRLEQIAELAGVSKTNLLYY) form a DNA-binding region, H-T-H motif.

Homodimer.

In terms of biological role, master transcription regulator which represses the degradation of pyrimidines (rutABCDEFG) and purines (gcl operon) for maintenance of metabolic balance between pyrimidines and purines. It also regulates the synthesis of pyrimidine nucleotides and arginine from glutamine (carAB) and the supply of glutamate (gadABWX). This is HTH-type transcriptional regulator RutR (rutR) from Escherichia coli O157:H7.